The following is a 1252-amino-acid chain: Putative late blight resistance protein homolog R1B-11 (1252 aa).

A coiled-coil region spans residues 543–566 (RYSDSLAFLKNQLQVIQTEFESLQ). NB-ARC domains follow at residues 684–736 (SVRR…RSRI) and 786–830 (SYHV…SSEG). LRR repeat units follow at residues 955–980 (FKFL…PYLR), 998–1026 (LWNL…VWDM), 1077–1100 (LKHL…KVSS), 1103–1125 (FPKL…ADDA), 1126–1149 (FPNL…CFTD), 1187–1212 (LVII…RLSS), and 1213–1236 (LPGI…DVDA). The HMA domain maps to 1188-1252 (VIIKKLVLKF…VGKLNKRDML (65 aa)).

It belongs to the disease resistance NB-LRR family.

The protein localises to the cytoplasm. It localises to the membrane. Confers resistance to late blight (Phytophthora infestans) races carrying the avirulence gene Avr1. Resistance proteins guard the plant against pathogens that contain an appropriate avirulence protein via an indirect interaction with this avirulence protein. That triggers a defense system including the hypersensitive response, which restricts the pathogen growth. The polypeptide is Putative late blight resistance protein homolog R1B-11 (R1B-11) (Solanum demissum (Wild potato)).